The following is an 890-amino-acid chain: Translation initiation factor IF-2 (890 aa).

Positions 110 to 216 (ISKPISKAPQ…KKPLIKTQDH (107 aa)) are disordered. Positions 135–148 (VPKRKGLVIIKKKR) are enriched in basic residues. Residues 184-199 (KSYNEPKNKENDDIKK) show a composition bias toward basic and acidic residues. Over residues 200–210 (QKVKKEKKKPL) the composition is skewed to basic residues. The tr-type G domain maps to 387 to 554 (TRPPVVTIMG…NILLQAEILE (168 aa)). The G1 stretch occupies residues 396 to 403 (GHVDHGKT). GTP is bound at residue 396-403 (GHVDHGKT). The segment at 421 to 425 (GITQH) is G2. Positions 442–445 (DTPG) are G3. GTP-binding positions include 442-446 (DTPGH) and 496-499 (NKMD). Positions 496-499 (NKMD) are G4. Residues 532-534 (SAR) are G5.

The protein belongs to the TRAFAC class translation factor GTPase superfamily. Classic translation factor GTPase family. IF-2 subfamily.

Its subcellular location is the cytoplasm. Its function is as follows. One of the essential components for the initiation of protein synthesis. Protects formylmethionyl-tRNA from spontaneous hydrolysis and promotes its binding to the 30S ribosomal subunits. Also involved in the hydrolysis of GTP during the formation of the 70S ribosomal complex. In Aliarcobacter butzleri (strain RM4018) (Arcobacter butzleri), this protein is Translation initiation factor IF-2.